A 429-amino-acid chain; its full sequence is Argininosuccinate lyase (429 aa).

It belongs to the lyase 1 family. Argininosuccinate lyase subfamily.

It is found in the cytoplasm. The enzyme catalyses 2-(N(omega)-L-arginino)succinate = fumarate + L-arginine. Its pathway is amino-acid biosynthesis; L-arginine biosynthesis; L-arginine from L-ornithine and carbamoyl phosphate: step 3/3. In Pyrobaculum arsenaticum (strain DSM 13514 / JCM 11321 / PZ6), this protein is Argininosuccinate lyase.